We begin with the raw amino-acid sequence, 1034 residues long: FERM domain-containing protein 4B (1034 aa).

The region spanning 59–361 (RHCQVHLLDD…SQHQFYLDRK (303 aa)) is the FERM domain. Ser-372 carries the phosphoserine modification. Coiled-coil stretches lie at residues 417–450 (EVSE…ELKK) and 531–561 (KKKR…RCGK). A necessary for adherens junction and tight junction localization region spans residues 542-971 (MKKLQEIENA…TQLTIGLSDY (430 aa)). Low complexity predominate over residues 576-589 (PSESSSLSDTTTYD). Disordered regions lie at residues 576–614 (PSES…ILPP), 635–698 (DTRQ…LESQ), 712–735 (FSLS…YTSQ), and 752–786 (TTQT…AQKD). Ser-608 carries the post-translational modification Phosphoserine. 2 stretches are compositionally biased toward polar residues: residues 635–650 (DTRQ…SSPY) and 663–674 (MPTTPVLTRNAY). Positions 675-685 (SSSHLEPESSS) are enriched in low complexity. At Ser-697 the chain carries Phosphoserine. Positions 713-722 (SLSKSQRSSS) are enriched in low complexity. Polar residues predominate over residues 769–781 (QNVSTSNSGSMPN). A Glycyl lysine isopeptide (Lys-Gly) (interchain with G-Cter in SUMO2) cross-link involves residue Lys-882. Disordered regions lie at residues 905–925 (RASG…SDRG) and 1004–1034 (DGTD…GTLV). The segment covering 906–920 (ASGQKDQGHSPQTSF) has biased composition (polar residues). Phosphoserine is present on Ser-915. Residues 1018–1034 (SEQRLFWHEDSKPGTLV) show a composition bias toward basic and acidic residues. Lys-1029 participates in a covalent cross-link: Glycyl lysine isopeptide (Lys-Gly) (interchain with G-Cter in SUMO2).

In terms of assembly, interacts with CYTH3. Interacts with PARD3. Interacts with CYTH1.

It is found in the cytoplasm. The protein localises to the cytoskeleton. Its subcellular location is the cell junction. The protein resides in the tight junction. It localises to the adherens junction. Functionally, member of GRP1 signaling complexes that are acutely recruited to plasma membrane ruffles in response to insulin receptor signaling. May function as a scaffolding protein that regulates epithelial cell polarity by connecting ARF6 activation with the PAR3 complex. Plays a redundant role with FRMD4A in epithelial polarization. The sequence is that of FERM domain-containing protein 4B from Homo sapiens (Human).